The following is an 809-amino-acid chain: MSRILFILLLLIVTQLSELQAAAFSVRQNRFDEVPDLQTPAPLATSTESSKKPEKATSGLLKKCLPCSDGIRCVPQIQCPAHVRMESHEKPQICDLPAGKFGYCCETGQNHTAPKPETSPKERRSGFPTILSPAVLDEARRNFEHLMHGVAQIPVRRGFPDFAHGLVFHSTAKDDLHNFAISNSAIEQVMTTQLFGKKEQVPVEDFITNNVPIKFTETPLAHHCQPPPVCGNIRSVYRSMDGTCNNPEPQRSLWGAAGQPMERMLPPAYEDGIWTPRAHSSDGTPLLGARKISRTLLSDVDRPHPKYNLMVMQFGQVLAHDISQTSSIRLEDGSLVQCCSPEGKVALSPQQSHFACMPIHVEPDDEFFSAFGVRCLNFVRLSLVPSPDCQLSYGKQLTKVTHFVDASPVYGSSDEASRSLRAFRGGRLRMMNDFGRDLLPLTNDKKACPSEEAGKSCFHSGDGRTNQIISLITLQILLAREHNRVAGALHELNPSASDETLFQEARRIVIAEMQHITYNEFLPIIIGPQQMKRFRLVPLHQGYSHDYNVNVNPAITNEFSGAAYRMGHSSVDGKFQIRQEHGRIDEVVNIPDVMFNPSRMRKREFYDDMLRTLYSQPMQQVDSSISQGLSRFLFRGDNPFGLDLAAINIQRGRDQGLRSYNDYLELMGAPKLHSFEQFPIEIAQKLSRVYRTPDDIDLWVGGLLEKAVEGGVVGVTFAEIIADQFARFKQGDRYYYEYDNGINPGAFNPLQLQEIRKVTLARLLCDNSDRLTLQAVPLAAFVRADHPGNQMIGCDDPNLPSVNLEAWRA.

The signal sequence occupies residues 1 to 21 (MSRILFILLLLIVTQLSELQA). The propeptide occupies 22–223 (AAFSVRQNRF…KFTETPLAHH (202 aa)). The interval 36–55 (DLQTPAPLATSTESSKKPEK) is disordered. N-linked (GlcNAc...) asparagine glycosylation occurs at asparagine 110. Cysteine 224 carries the N-acetylcysteine; in Chorion peroxidase light chain modification. Cysteine 230 and cysteine 244 are disulfide-bonded. Histidine 320 (proton acceptor) is an active-site residue. A disulfide bond links cysteine 448 and cysteine 457. Histidine 568 lines the heme b pocket. A disulfide bridge connects residues cysteine 765 and cysteine 794.

Belongs to the peroxidase family. XPO subfamily. Heterodimer. Heme b serves as cofactor. Expressed at low levels in the germarium and early follicles. Expression becomes progressively stronger during vitellogenesis, and is highly expressed in germ cells and somatic cells. A subset of follicle cells, termed border cells (BC), exhibit a high level of expression.

It is found in the secreted. It carries out the reaction 2 a phenolic donor + H2O2 = 2 a phenolic radical donor + 2 H2O. In terms of biological role, required for ovarian follicle maturation. Involved in the formation of a rigid and insoluble egg chorion by catalyzing chorion protein cross-linking through dityrosine formation and phenol oxidase-catalyzed chorion melanization. This Drosophila melanogaster (Fruit fly) protein is Chorion peroxidase (Pxt).